A 525-amino-acid polypeptide reads, in one-letter code: GMP synthase [glutamine-hydrolyzing] (525 aa).

A Glutamine amidotransferase type-1 domain is found at 13–202 (TILVLDFGSQ…AVDLCHAKQN (190 aa)). C89 acts as the Nucleophile in catalysis. Catalysis depends on residues H176 and E178. The region spanning 203–400 (WTMENFIDTE…LGIPHDLVWR (198 aa)) is the GMPS ATP-PPase domain. ATP is bound at residue 231-237 (SGGVDST). K241 participates in a covalent cross-link: Glycyl lysine isopeptide (Lys-Gly) (interchain with G-Cter in ubiquitin). R304 lines the XMP pocket. K426 participates in a covalent cross-link: Glycyl lysine isopeptide (Lys-Gly) (interchain with G-Cter in ubiquitin). XMP is bound by residues D462, K517, and E523.

As to quaternary structure, homodimer. The cofactor is Mg(2+).

The protein resides in the cytoplasm. It localises to the cytosol. The enzyme catalyses XMP + L-glutamine + ATP + H2O = GMP + L-glutamate + AMP + diphosphate + 2 H(+). It functions in the pathway purine metabolism; GMP biosynthesis; GMP from XMP (L-Gln route): step 1/1. In terms of biological role, catalyzes the conversion of xanthine monophosphate (XMP) to GMP in the presence of glutamine and ATP through an adenyl-XMP intermediate. This Saccharomyces cerevisiae (strain ATCC 204508 / S288c) (Baker's yeast) protein is GMP synthase [glutamine-hydrolyzing].